A 454-amino-acid chain; its full sequence is Cathepsin C (454 aa).

A signal peptide spans 1 to 20 (MHWVFHCILIILACLRFTCA). The propeptide occupies 21–217 (DTPANCTYED…SKELISLTGN (197 aa)). Asparagine 25 carries N-linked (GlcNAc...) asparagine glycosylation. 3 disulfide bridges follow: cysteine 26/cysteine 107, cysteine 244/cysteine 287, and cysteine 280/cysteine 321. The active site involves cysteine 247. Residue asparagine 265 is glycosylated (N-linked (GlcNAc...) asparagine). Chloride is bound at residue phenylalanine 291. The N-linked (GlcNAc...) asparagine glycan is linked to asparagine 326. Residue tyrosine 337 coordinates chloride. Residues histidine 398 and asparagine 420 contribute to the active site.

Belongs to the peptidase C1 family. Chloride is required as a cofactor.

The protein localises to the lysosome. Its function is as follows. Thiol protease. Has a role as a digestive enzyme. This is Cathepsin C from Schistosoma mansoni (Blood fluke).